The primary structure comprises 426 residues: D-tagatose-1,6-bisphosphate aldolase subunit KbaZ (426 aa).

This sequence belongs to the GatZ/KbaZ family. KbaZ subfamily. Forms a complex with KbaY.

Its pathway is carbohydrate metabolism; D-tagatose 6-phosphate degradation; D-glyceraldehyde 3-phosphate and glycerone phosphate from D-tagatose 6-phosphate: step 2/2. Its function is as follows. Component of the tagatose-1,6-bisphosphate aldolase KbaYZ that is required for full activity and stability of the Y subunit. Could have a chaperone-like function for the proper and stable folding of KbaY. When expressed alone, KbaZ does not show any aldolase activity. The protein is D-tagatose-1,6-bisphosphate aldolase subunit KbaZ of Escherichia coli O81 (strain ED1a).